Here is a 481-residue protein sequence, read N- to C-terminus: Metalloprotease TldD (481 aa).

Belongs to the peptidase U62 family.

In terms of biological role, metalloprotease involved in CcdA degradation. Suppresses the inhibitory activity of the carbon storage regulator (CsrA). The protein is Metalloprotease TldD (tldD) of Escherichia coli (strain K12).